A 333-amino-acid chain; its full sequence is tRNA U34 carboxymethyltransferase (333 aa).

Carboxy-S-adenosyl-L-methionine-binding positions include Lys97, Trp111, Lys116, Gly136, 158-160 (DPS), 189-190 (IE), Met205, Tyr209, and Arg324.

This sequence belongs to the class I-like SAM-binding methyltransferase superfamily. CmoB family. In terms of assembly, homotetramer.

The enzyme catalyses carboxy-S-adenosyl-L-methionine + 5-hydroxyuridine(34) in tRNA = 5-carboxymethoxyuridine(34) in tRNA + S-adenosyl-L-homocysteine + H(+). Functionally, catalyzes carboxymethyl transfer from carboxy-S-adenosyl-L-methionine (Cx-SAM) to 5-hydroxyuridine (ho5U) to form 5-carboxymethoxyuridine (cmo5U) at position 34 in tRNAs. This Chromohalobacter salexigens (strain ATCC BAA-138 / DSM 3043 / CIP 106854 / NCIMB 13768 / 1H11) protein is tRNA U34 carboxymethyltransferase.